Reading from the N-terminus, the 509-residue chain is Bifunctional purine biosynthesis protein PurH (509 aa).

The MGS-like domain maps to 1 to 144; it reads MKRALISVSD…KNYAAVTVVV (144 aa).

It belongs to the PurH family.

The enzyme catalyses (6R)-10-formyltetrahydrofolate + 5-amino-1-(5-phospho-beta-D-ribosyl)imidazole-4-carboxamide = 5-formamido-1-(5-phospho-D-ribosyl)imidazole-4-carboxamide + (6S)-5,6,7,8-tetrahydrofolate. It carries out the reaction IMP + H2O = 5-formamido-1-(5-phospho-D-ribosyl)imidazole-4-carboxamide. It functions in the pathway purine metabolism; IMP biosynthesis via de novo pathway; 5-formamido-1-(5-phospho-D-ribosyl)imidazole-4-carboxamide from 5-amino-1-(5-phospho-D-ribosyl)imidazole-4-carboxamide (10-formyl THF route): step 1/1. Its pathway is purine metabolism; IMP biosynthesis via de novo pathway; IMP from 5-formamido-1-(5-phospho-D-ribosyl)imidazole-4-carboxamide: step 1/1. The protein is Bifunctional purine biosynthesis protein PurH of Listeria monocytogenes serotype 4a (strain HCC23).